The primary structure comprises 270 residues: MGNTSSERAALERHGGHKTPRRDSSGGTKDGDRPKILMDSPEDADLFHSEEIKAPEKEEFLAWQHDLEVNDKAPAQARPTVFRWTGGGKEVYLSGSFNNWSKLPLTRSHNNFVAILDLPEGEHQYKFFVDGQWTHDPSEPIVTSQLGTVNNIIQVKKTDFEVFDALMVDSQKCSDVSELSSSPPGPYHQEPYVCKPEERFRAPPILPPHLLQVILNKDTGISCDPALLPEPNHVMLNHLYALSIKDGVMVLSATHRYKKKYVTTLLYKPI.

A disordered region spans residues 1–43 (MGNTSSERAALERHGGHKTPRRDSSGGTKDGDRPKILMDSPED). Residue Gly-2 is the site of N-myristoyl glycine attachment. At Thr-4 the chain carries Phosphothreonine. Ser-5 and Ser-6 each carry phosphoserine. Thr-19 carries the post-translational modification Phosphothreonine. Residues 21–36 (RRDSSGGTKDGDRPKI) are compositionally biased toward basic and acidic residues. Ser-24 and Ser-25 each carry phosphoserine; by autocatalysis. Phosphoserine is present on residues Ser-40, Ser-96, Ser-101, and Ser-108. The glycogen-binding domain stretch occupies residues 68–163 (EVNDKAPAQA…QVKKTDFEVF (96 aa)). Thr-148 is modified (phosphothreonine). Ser-182 carries the phosphoserine modification.

This sequence belongs to the 5'-AMP-activated protein kinase beta subunit family. As to quaternary structure, AMPK is a heterotrimer of an alpha catalytic subunit (PRKAA1 or PRKAA2), a beta (PRKAB1 or PRKAB2) and a gamma non-catalytic subunits (PRKAG1, PRKAG2 or PRKAG3). Interacts with FNIP1 and FNIP2. Phosphorylated when associated with the catalytic subunit (PRKAA1 or PRKAA2). Phosphorylated by ULK1; leading to negatively regulate AMPK activity and suggesting the existence of a regulatory feedback loop between ULK1 and AMPK.

Non-catalytic subunit of AMP-activated protein kinase (AMPK), an energy sensor protein kinase that plays a key role in regulating cellular energy metabolism. In response to reduction of intracellular ATP levels, AMPK activates energy-producing pathways and inhibits energy-consuming processes: inhibits protein, carbohydrate and lipid biosynthesis, as well as cell growth and proliferation. AMPK acts via direct phosphorylation of metabolic enzymes, and by longer-term effects via phosphorylation of transcription regulators. Also acts as a regulator of cellular polarity by remodeling the actin cytoskeleton; probably by indirectly activating myosin. Beta non-catalytic subunit acts as a scaffold on which the AMPK complex assembles, via its C-terminus that bridges alpha (PRKAA1 or PRKAA2) and gamma subunits (PRKAG1, PRKAG2 or PRKAG3). The protein is 5'-AMP-activated protein kinase subunit beta-1 (PRKAB1) of Homo sapiens (Human).